A 100-amino-acid chain; its full sequence is Integration host factor subunit alpha (100 aa).

The protein belongs to the bacterial histone-like protein family. In terms of assembly, heterodimer of an alpha and a beta chain.

Its function is as follows. This protein is one of the two subunits of integration host factor, a specific DNA-binding protein that functions in genetic recombination as well as in transcriptional and translational control. This Rhizorhabdus wittichii (strain DSM 6014 / CCUG 31198 / JCM 15750 / NBRC 105917 / EY 4224 / RW1) (Sphingomonas wittichii) protein is Integration host factor subunit alpha.